Consider the following 212-residue polypeptide: Thymidylate kinase (212 aa).

11-18 contacts ATP; it reads GIEGSGKT.

The protein belongs to the thymidylate kinase family.

The enzyme catalyses dTMP + ATP = dTDP + ADP. Phosphorylation of dTMP to form dTDP in both de novo and salvage pathways of dTTP synthesis. The protein is Thymidylate kinase of Buchnera aphidicola subsp. Baizongia pistaciae (strain Bp).